A 436-amino-acid chain; its full sequence is F-box/LRR-repeat protein 20 (436 aa).

Residues 22-68 (AVINKKLPKELLLRIFSFLDVVTLCRCAQVSRAWNVLALDGSNWQRI) enclose the F-box domain. LRR repeat units follow at residues 74 to 100 (QRDI…SLRG), 101 to 126 (CLGV…SLNG), 127 to 152 (CTKT…DLAS), 153 to 178 (CTSI…NISW), 179 to 204 (CDQV…FLKG), 205 to 230 (CTQL…NLQT), 231 to 256 (CLQI…CASG), 257 to 282 (CSNI…EVAR), 283 to 308 (CSQL…DLEE), 309 to 334 (CVQI…SLSH), 335 to 363 (CELI…ELDN), 364 to 388 (CPLI…ELYD), and 389 to 414 (CQQI…AYFA). Thr417 carries the post-translational modification Phosphothreonine. Ser421 is subject to Phosphoserine.

Interacts with SKP1 and CUL1. Highly expressed in brain.

Its subcellular location is the cytoplasm. Substrate-recognition component of the SCF (SKP1-CUL1-F-box protein)-type E3 ubiquitin ligase complex. Isoform 3 regulates neural transmission by binding and ubiquitinating RIMS1, a modulator of presynaptic plasticity. The sequence is that of F-box/LRR-repeat protein 20 (Fbxl20) from Mus musculus (Mouse).